The following is a 208-amino-acid chain: ATP-dependent Clp protease proteolytic subunit (208 aa).

Serine 107 functions as the Nucleophile in the catalytic mechanism. Residue histidine 132 is part of the active site.

The protein belongs to the peptidase S14 family. As to quaternary structure, fourteen ClpP subunits assemble into 2 heptameric rings which stack back to back to give a disk-like structure with a central cavity, resembling the structure of eukaryotic proteasomes.

Its subcellular location is the cytoplasm. The catalysed reaction is Hydrolysis of proteins to small peptides in the presence of ATP and magnesium. alpha-casein is the usual test substrate. In the absence of ATP, only oligopeptides shorter than five residues are hydrolyzed (such as succinyl-Leu-Tyr-|-NHMec, and Leu-Tyr-Leu-|-Tyr-Trp, in which cleavage of the -Tyr-|-Leu- and -Tyr-|-Trp bonds also occurs).. Functionally, cleaves peptides in various proteins in a process that requires ATP hydrolysis. Has a chymotrypsin-like activity. Plays a major role in the degradation of misfolded proteins. This Methylorubrum populi (strain ATCC BAA-705 / NCIMB 13946 / BJ001) (Methylobacterium populi) protein is ATP-dependent Clp protease proteolytic subunit.